Reading from the N-terminus, the 157-residue chain is MGIFTFEDESTTTVAPARLYKALVKDADTIIPKAVEAIQSVEIVEGNGGPGTIKKLTLIEGGETKYVLHKIEAIDEANLGYNYSIVGGIGLPDTIEKISFETKLFEGANGGSIGKVTIKIETKGDAQPNEEEGKAAKARGDAFFKAIENYLIGHPEY.

Residue Asp-8 participates in trans-zeatin binding. Pro-32, Val-35, and Ile-38 together coordinate Ca(2+). Trans-zeatin contacts are provided by Glu-60, His-69, Tyr-81, and Tyr-83.

It belongs to the BetVI family.

It is found in the cytoplasm. Its subcellular location is the cytosol. Functionally, class II ribonuclease (RNase). Binds to cytokinins. Interacts with melatonin. In Lupinus luteus (European yellow lupine), this protein is Class 10 plant pathogenesis-related protein 2F.